The primary structure comprises 335 residues: Peroxidase 53 (335 aa).

The signal sequence occupies residues 1-30 (MAVTNLPTCDGLFIISLIVIVSSIFGTSSA). At glutamine 31 the chain carries Pyrrolidone carboxylic acid. N-linked (GlcNAc...) asparagine glycosylation is found at asparagine 33 and asparagine 43. Intrachain disulfides connect cysteine 41–cysteine 121, cysteine 74–cysteine 79, cysteine 127–cysteine 329, and cysteine 206–cysteine 238. The Proton acceptor role is filled by histidine 72. The Ca(2+) site is built by aspartate 73, valine 76, glycine 78, aspartate 80, and serine 82. Asparagine 165 carries an N-linked (GlcNAc...) asparagine glycan. Proline 169 is a substrate binding site. An N-linked (GlcNAc...) asparagine glycan is attached at asparagine 177. Residue histidine 199 coordinates heme b. Residue threonine 200 participates in Ca(2+) binding. Asparagine 215, asparagine 227, and asparagine 241 each carry an N-linked (GlcNAc...) asparagine glycan. Ca(2+) contacts are provided by aspartate 251, threonine 254, and aspartate 259. An N-linked (GlcNAc...) asparagine glycan is attached at asparagine 297.

Belongs to the peroxidase family. Classical plant (class III) peroxidase subfamily. Requires Ca(2+) as cofactor. Heme b serves as cofactor. Mainly expressed in roots.

Its subcellular location is the secreted. It catalyses the reaction 2 a phenolic donor + H2O2 = 2 a phenolic radical donor + 2 H2O. Its function is as follows. Removal of H(2)O(2), oxidation of toxic reductants, biosynthesis and degradation of lignin, suberization, auxin catabolism, response to environmental stresses such as wounding, pathogen attack and oxidative stress. These functions might be dependent on each isozyme/isoform in each plant tissue. Functionally, closely linked to lignin formation by showing monolignol substrate specificity. The polypeptide is Peroxidase 53 (PER53) (Arabidopsis thaliana (Mouse-ear cress)).